A 364-amino-acid chain; its full sequence is Phosphoserine aminotransferase (364 aa).

Arg-46 is an L-glutamate binding site. Pyridoxal 5'-phosphate contacts are provided by residues 80-81 (AR), Trp-106, Thr-157, Asp-176, and Gln-199. Lys-200 is modified (N6-(pyridoxal phosphate)lysine). 241–242 (NT) serves as a coordination point for pyridoxal 5'-phosphate.

Belongs to the class-V pyridoxal-phosphate-dependent aminotransferase family. SerC subfamily. Homodimer. Pyridoxal 5'-phosphate is required as a cofactor.

It is found in the cytoplasm. It carries out the reaction O-phospho-L-serine + 2-oxoglutarate = 3-phosphooxypyruvate + L-glutamate. The catalysed reaction is 4-(phosphooxy)-L-threonine + 2-oxoglutarate = (R)-3-hydroxy-2-oxo-4-phosphooxybutanoate + L-glutamate. It functions in the pathway amino-acid biosynthesis; L-serine biosynthesis; L-serine from 3-phospho-D-glycerate: step 2/3. The protein operates within cofactor biosynthesis; pyridoxine 5'-phosphate biosynthesis; pyridoxine 5'-phosphate from D-erythrose 4-phosphate: step 3/5. Functionally, catalyzes the reversible conversion of 3-phosphohydroxypyruvate to phosphoserine and of 3-hydroxy-2-oxo-4-phosphonooxybutanoate to phosphohydroxythreonine. The protein is Phosphoserine aminotransferase of Vibrio parahaemolyticus serotype O3:K6 (strain RIMD 2210633).